Consider the following 909-residue polypeptide: DNA mismatch repair protein MutS (909 aa).

614 to 621 (GPNMAGKS) contacts ATP. The segment at 798 to 827 (LEENSPQNNDISKESSSSSNSHDKLESSVI) is disordered. Over residues 818-827 (SHDKLESSVI) the composition is skewed to basic and acidic residues.

This sequence belongs to the DNA mismatch repair MutS family.

This protein is involved in the repair of mismatches in DNA. It is possible that it carries out the mismatch recognition step. This protein has a weak ATPase activity. The polypeptide is DNA mismatch repair protein MutS (Clostridium novyi (strain NT)).